A 379-amino-acid chain; its full sequence is Chaperone protein DnaJ (379 aa).

In terms of domain architecture, J spans 5-71 (DYYEILGVSR…EKRAMYDRFG (67 aa)). The segment at 149–231 (GTTIPIEYDR…CGGSGRIRKR (83 aa)) adopts a CR-type zinc-finger fold. Residues C162, C165, C179, C182, C205, C208, C219, and C222 each coordinate Zn(2+). CXXCXGXG motif repeat units lie at residues 162–169 (CSHCNGEG), 179–186 (CPKCHGTG), 205–212 (CNQCGGTG), and 219–226 (CHVCGGSG).

The protein belongs to the DnaJ family. In terms of assembly, homodimer. Zn(2+) serves as cofactor.

It is found in the cytoplasm. In terms of biological role, participates actively in the response to hyperosmotic and heat shock by preventing the aggregation of stress-denatured proteins and by disaggregating proteins, also in an autonomous, DnaK-independent fashion. Unfolded proteins bind initially to DnaJ; upon interaction with the DnaJ-bound protein, DnaK hydrolyzes its bound ATP, resulting in the formation of a stable complex. GrpE releases ADP from DnaK; ATP binding to DnaK triggers the release of the substrate protein, thus completing the reaction cycle. Several rounds of ATP-dependent interactions between DnaJ, DnaK and GrpE are required for fully efficient folding. Also involved, together with DnaK and GrpE, in the DNA replication of plasmids through activation of initiation proteins. This chain is Chaperone protein DnaJ, found in Thermosipho africanus (strain TCF52B).